The following is a 49-amino-acid chain: MRVNVTLACTETGDRNYITTKNKRTNPDRLEMKKYSPRLKKYTLHRETK.

This sequence belongs to the bacterial ribosomal protein bL33 family.

The polypeptide is Large ribosomal subunit protein bL33B (Bacillus velezensis (strain DSM 23117 / BGSC 10A6 / LMG 26770 / FZB42) (Bacillus amyloliquefaciens subsp. plantarum)).